A 277-amino-acid chain; its full sequence is Phosphate import ATP-binding protein PstB 2 (277 aa).

The ABC transporter domain maps to 31–272; it reads IEVPGLSLFY…PAKKQTEDYI (242 aa). 63-70 is a binding site for ATP; sequence GPSGCGKS.

Belongs to the ABC transporter superfamily. Phosphate importer (TC 3.A.1.7) family. In terms of assembly, the complex is composed of two ATP-binding proteins (PstB), two transmembrane proteins (PstC and PstA) and a solute-binding protein (PstS).

The protein localises to the cell inner membrane. It carries out the reaction phosphate(out) + ATP + H2O = ADP + 2 phosphate(in) + H(+). Functionally, part of the ABC transporter complex PstSACB involved in phosphate import. Responsible for energy coupling to the transport system. The polypeptide is Phosphate import ATP-binding protein PstB 2 (Pseudomonas syringae pv. tomato (strain ATCC BAA-871 / DC3000)).